Consider the following 643-residue polypeptide: 1-deoxy-D-xylulose-5-phosphate synthase (643 aa).

Thiamine diphosphate contacts are provided by residues His72 and 113 to 115 (GHA). Residue Asp144 participates in Mg(2+) binding. Thiamine diphosphate is bound by residues 145-146 (GA), Asn174, Tyr287, and Glu370. Asn174 provides a ligand contact to Mg(2+).

It belongs to the transketolase family. DXPS subfamily. In terms of assembly, homodimer. It depends on Mg(2+) as a cofactor. Thiamine diphosphate serves as cofactor.

The enzyme catalyses D-glyceraldehyde 3-phosphate + pyruvate + H(+) = 1-deoxy-D-xylulose 5-phosphate + CO2. It participates in metabolic intermediate biosynthesis; 1-deoxy-D-xylulose 5-phosphate biosynthesis; 1-deoxy-D-xylulose 5-phosphate from D-glyceraldehyde 3-phosphate and pyruvate: step 1/1. Catalyzes the acyloin condensation reaction between C atoms 2 and 3 of pyruvate and glyceraldehyde 3-phosphate to yield 1-deoxy-D-xylulose-5-phosphate (DXP). In Parasynechococcus marenigrum (strain WH8102), this protein is 1-deoxy-D-xylulose-5-phosphate synthase.